Reading from the N-terminus, the 1002-residue chain is Isoleucine--tRNA ligase (1002 aa).

The 'HIGH' region signature appears at 70 to 80 (PYANGNIHIGH). Glutamate 630 contributes to the L-isoleucyl-5'-AMP binding site. Residues 671–675 (KMSKS) carry the 'KMSKS' region motif. Residue lysine 674 coordinates ATP.

Belongs to the class-I aminoacyl-tRNA synthetase family. IleS type 1 subfamily. As to quaternary structure, monomer.

The protein resides in the cytoplasm. The catalysed reaction is tRNA(Ile) + L-isoleucine + ATP = L-isoleucyl-tRNA(Ile) + AMP + diphosphate. Functionally, catalyzes the attachment of isoleucine to tRNA(Ile). As IleRS can inadvertently accommodate and process structurally similar amino acids such as valine, to avoid such errors it has two additional distinct tRNA(Ile)-dependent editing activities. One activity is designated as 'pretransfer' editing and involves the hydrolysis of activated Val-AMP. The other activity is designated 'posttransfer' editing and involves deacylation of mischarged Val-tRNA(Ile). The chain is Isoleucine--tRNA ligase from Bradyrhizobium diazoefficiens (strain JCM 10833 / BCRC 13528 / IAM 13628 / NBRC 14792 / USDA 110).